A 98-amino-acid chain; its full sequence is Large ribosomal subunit protein uL23 (98 aa).

This sequence belongs to the universal ribosomal protein uL23 family. In terms of assembly, part of the 50S ribosomal subunit. Contacts protein L29, and trigger factor when it is bound to the ribosome.

Its function is as follows. One of the early assembly proteins it binds 23S rRNA. One of the proteins that surrounds the polypeptide exit tunnel on the outside of the ribosome. Forms the main docking site for trigger factor binding to the ribosome. The protein is Large ribosomal subunit protein uL23 of Nitrosococcus oceani (strain ATCC 19707 / BCRC 17464 / JCM 30415 / NCIMB 11848 / C-107).